A 571-amino-acid chain; its full sequence is Medium/long-chain-fatty-acid--CoA ligase FadD8 (571 aa).

Residues 1–22 form a disordered region; the sequence is MSTAGDDAVGVPPACGGRSDAV.

This sequence belongs to the ATP-dependent AMP-binding enzyme family.

The catalysed reaction is a medium-chain fatty acid + ATP + CoA = a medium-chain fatty acyl-CoA + AMP + diphosphate. The enzyme catalyses a long-chain fatty acid + ATP + CoA = a long-chain fatty acyl-CoA + AMP + diphosphate. It catalyses the reaction hexanoate + ATP + CoA = hexanoyl-CoA + AMP + diphosphate. It carries out the reaction dodecanoate + ATP + CoA = dodecanoyl-CoA + AMP + diphosphate. The catalysed reaction is hexadecanoate + ATP + CoA = hexadecanoyl-CoA + AMP + diphosphate. Its pathway is lipid metabolism; fatty acid metabolism. Functionally, catalyzes the activation of medium/long-chain fatty acids as acyl-coenzyme A (acyl-CoA). The protein is Medium/long-chain-fatty-acid--CoA ligase FadD8 of Mycobacterium tuberculosis (strain ATCC 25618 / H37Rv).